Consider the following 555-residue polypeptide: Methyl-coenzyme M reductase subunit alpha (555 aa).

Glutamine 152 provides a ligand contact to coenzyme F430. Residues arginine 230, 261–262 (KH), and arginine 275 each bind coenzyme B. Positions 337 and 448 each coordinate coenzyme M.

This sequence belongs to the methyl-coenzyme M reductase alpha subunit family. In terms of assembly, MCR is a hexamer of two alpha, two beta, and two gamma chains, forming a dimer of heterotrimers. The cofactor is coenzyme F430.

The protein resides in the cytoplasm. It catalyses the reaction coenzyme B + methyl-coenzyme M = methane + coenzyme M-coenzyme B heterodisulfide. Its pathway is one-carbon metabolism; methyl-coenzyme M reduction; methane from methyl-coenzyme M: step 1/1. Its function is as follows. Component of the methyl-coenzyme M reductase (MCR) I that catalyzes the reductive cleavage of methyl-coenzyme M (CoM-S-CH3 or 2-(methylthio)ethanesulfonate) using coenzyme B (CoB or 7-mercaptoheptanoylthreonine phosphate) as reductant which results in the production of methane and the mixed heterodisulfide of CoB and CoM (CoM-S-S-CoB). This is the final step in methanogenesis. In Methanococcus voltae, this protein is Methyl-coenzyme M reductase subunit alpha (mcrA).